The chain runs to 148 residues: Protein GLUTAMINE DUMPER 3 (148 aa).

The interval 1 to 24 is disordered; that stretch reads MEGRQYYPPRENVEGNRTTMGGGP. The Extracellular segment spans residues 1 to 34; the sequence is MEGRQYYPPRENVEGNRTTMGGGPHSPWHSPVPY. The helical transmembrane segment at 35–55 threads the bilayer; sequence LFGGLAAMLGLIAFALLILAC. At 56-148 the chain is on the cytoplasmic side; the sequence is SYWRLSGYLD…RSSESNGETH (93 aa). Residues 99 to 103 carry the VIMAG motif; that stretch reads VIMAG. Residues 120-132 are compositionally biased toward acidic residues; that stretch reads CDDDDDEDDDVEG. The segment at 120–148 is disordered; sequence CDDDDDEDDDVEGSDQVVPRSSESNGETH. Positions 138-148 are enriched in polar residues; the sequence is PRSSESNGETH.

It belongs to the GLUTAMINE DUMPER 1 (TC 9.B.60) family. As to expression, expressed in the vascular tissues. Also detected in anthers.

It is found in the membrane. Probable subunit of an amino acid transporter involved in the regulation of the amino acid metabolism. Stimulates amino acid export by activating nonselective amino acid facilitators. Acts upstream genes involved in the salicylic acid (SA) pathway and in the geminivirus-host interaction. The sequence is that of Protein GLUTAMINE DUMPER 3 (GDU3) from Arabidopsis thaliana (Mouse-ear cress).